The following is a 207-amino-acid chain: Adenylyl-sulfate kinase (207 aa).

34–41 lines the ATP pocket; that stretch reads GLSGSGKS. The Phosphoserine intermediate role is filled by serine 108.

It belongs to the APS kinase family.

It catalyses the reaction adenosine 5'-phosphosulfate + ATP = 3'-phosphoadenylyl sulfate + ADP + H(+). It participates in sulfur metabolism; hydrogen sulfide biosynthesis; sulfite from sulfate: step 2/3. Functionally, catalyzes the synthesis of activated sulfate. This Lactiplantibacillus plantarum (strain ATCC BAA-793 / NCIMB 8826 / WCFS1) (Lactobacillus plantarum) protein is Adenylyl-sulfate kinase.